We begin with the raw amino-acid sequence, 398 residues long: 1-deoxy-D-xylulose 5-phosphate reductoisomerase (398 aa).

7 residues coordinate NADPH: Thr11, Gly12, Ser13, Ile14, Arg38, Asn39, and Asn125. Lys126 contributes to the 1-deoxy-D-xylulose 5-phosphate binding site. Glu127 is a binding site for NADPH. Asp151 provides a ligand contact to Mn(2+). Positions 152, 153, 179, and 202 each coordinate 1-deoxy-D-xylulose 5-phosphate. Glu153 contributes to the Mn(2+) binding site. Gly208 contributes to the NADPH binding site. 1-deoxy-D-xylulose 5-phosphate contacts are provided by Ser215, Asn220, Lys221, and Glu224. Glu224 contributes to the Mn(2+) binding site.

This sequence belongs to the DXR family. Mg(2+) serves as cofactor. Requires Mn(2+) as cofactor.

The enzyme catalyses 2-C-methyl-D-erythritol 4-phosphate + NADP(+) = 1-deoxy-D-xylulose 5-phosphate + NADPH + H(+). It functions in the pathway isoprenoid biosynthesis; isopentenyl diphosphate biosynthesis via DXP pathway; isopentenyl diphosphate from 1-deoxy-D-xylulose 5-phosphate: step 1/6. Its function is as follows. Catalyzes the NADPH-dependent rearrangement and reduction of 1-deoxy-D-xylulose-5-phosphate (DXP) to 2-C-methyl-D-erythritol 4-phosphate (MEP). This is 1-deoxy-D-xylulose 5-phosphate reductoisomerase from Burkholderia pseudomallei (strain 1106a).